The chain runs to 139 residues: Gastrula zinc finger protein XlCGF29.1 (139 aa).

5 C2H2-type zinc fingers span residues 6-28, 34-56, 62-84, 90-112, and 117-139; these read FTCT…LLIH, FDST…LSTH, FVCT…LHSH, FPCS…LRHH, and FPCT…QMIH.

The protein belongs to the krueppel C2H2-type zinc-finger protein family.

The protein localises to the nucleus. May be involved in transcriptional regulation. This chain is Gastrula zinc finger protein XlCGF29.1, found in Xenopus laevis (African clawed frog).